The following is a 234-amino-acid chain: Probable pectate lyase F (234 aa).

Positions 1 to 17 (MRSTAAVLSILLPGALA) are cleaved as a signal peptide. An N-linked (GlcNAc...) asparagine glycan is attached at N168.

It belongs to the polysaccharide lyase 3 family. The cofactor is Ca(2+).

The protein localises to the secreted. It carries out the reaction Eliminative cleavage of (1-&gt;4)-alpha-D-galacturonan to give oligosaccharides with 4-deoxy-alpha-D-galact-4-enuronosyl groups at their non-reducing ends.. In terms of biological role, pectinolytic enzyme consist of four classes of enzymes: pectin lyase, polygalacturonase, pectin methylesterase and rhamnogalacturonase. Among pectinolytic enzymes, pectin lyase is the most important in depolymerization of pectin, since it cleaves internal glycosidic bonds of highly methylated pectins. Favors pectate, the anion, over pectin, the methyl ester. The sequence is that of Probable pectate lyase F (plyF) from Aspergillus terreus (strain NIH 2624 / FGSC A1156).